Reading from the N-terminus, the 422-residue chain is Glutamyl-tRNA reductase (422 aa).

Substrate contacts are provided by residues 49 to 52, S107, 112 to 114, and Q118; these read TCNR and EPQ. C50 functions as the Nucleophile in the catalytic mechanism. 187-192 is a binding site for NADP(+); it reads GAGETI.

The protein belongs to the glutamyl-tRNA reductase family. Homodimer.

The enzyme catalyses (S)-4-amino-5-oxopentanoate + tRNA(Glu) + NADP(+) = L-glutamyl-tRNA(Glu) + NADPH + H(+). Its pathway is porphyrin-containing compound metabolism; protoporphyrin-IX biosynthesis; 5-aminolevulinate from L-glutamyl-tRNA(Glu): step 1/2. Its function is as follows. Catalyzes the NADPH-dependent reduction of glutamyl-tRNA(Glu) to glutamate 1-semialdehyde (GSA). This chain is Glutamyl-tRNA reductase, found in Stutzerimonas stutzeri (strain A1501) (Pseudomonas stutzeri).